The chain runs to 513 residues: DNA damage-binding protein CMR1 (513 aa).

A compositionally biased stretch (basic and acidic residues) spans 35-45 (RSEAGIEDHRK). A disordered region spans residues 35–103 (RSEAGIEDHR…TAQNVKQEEE (69 aa)). 6 WD repeats span residues 183-224 (IVHE…PDPE), 237-277 (LFSR…SDEL), 329-369 (LSDK…AKPD), 386-425 (NSRL…PSEL), 438-477 (GRWV…LSHL), and 478-513 (ETST…APQE).

Belongs to the WD repeat DDB2/WDR76 family.

DNA-binding protein that binds to both single- and double-stranded DNA. Binds preferentially to UV-damaged DNA. May be involved in DNA-metabolic processes. The polypeptide is DNA damage-binding protein CMR1 (Eremothecium gossypii (strain ATCC 10895 / CBS 109.51 / FGSC 9923 / NRRL Y-1056) (Yeast)).